The following is a 374-amino-acid chain: 4-hydroxybenzoate polyprenyltransferase, mitochondrial (374 aa).

The transit peptide at Met1–Ser34 directs the protein to the mitochondrion. Residues Ala35–Pro83 are Mitochondrial matrix-facing. A helical membrane pass occupies residues Ile84–Gly104. Residues Cys105–Asp108 are Mitochondrial intermembrane-facing. The helical transmembrane segment at Trp109–Ile129 threads the bilayer. The Mitochondrial matrix segment spans residues Asn130–Pro148. The helical transmembrane segment at Ile149–Leu169 threads the bilayer. Over Ala170–Gly172 the chain is Mitochondrial intermembrane. A helical transmembrane segment spans residues Val173–Val193. Over Thr194–Arg200 the chain is Mitochondrial matrix. Residues Ile201–Trp221 form a helical membrane-spanning segment. At Ser222–Pro230 the chain is on the mitochondrial intermembrane side. The chain crosses the membrane as a helical span at residues Ala231 to Tyr251. Residues Ala252–Gln277 are Mitochondrial matrix-facing. A helical transmembrane segment spans residues Trp278–Gly298. The Mitochondrial intermembrane segment spans residues Gln299 to Lys332. A helical transmembrane segment spans residues Phe333–Cys353. Over Lys354 to Ser374 the chain is Mitochondrial matrix.

This sequence belongs to the UbiA prenyltransferase family. It depends on Mg(2+) as a cofactor.

The protein localises to the mitochondrion inner membrane. The catalysed reaction is an all-trans-polyprenyl diphosphate + 4-hydroxybenzoate = a 4-hydroxy-3-(all-trans-polyprenyl)benzoate + diphosphate. The enzyme catalyses all-trans-decaprenyl diphosphate + 4-hydroxybenzoate = 4-hydroxy-3-(all-trans-decaprenyl)benzoate + diphosphate. It catalyses the reaction all-trans-nonaprenyl diphosphate + 4-hydroxybenzoate = 4-hydroxy-3-(all-trans-nonaprenyl)benzoate + diphosphate. It participates in cofactor biosynthesis; ubiquinone biosynthesis. Mediates the second step in the final reaction sequence of coenzyme Q (CoQ) biosynthesis. Catalyzes the prenylation of para-hydroxybenzoate (PHB) with an all-trans polyprenyl donor (such as all-trans-nonaprenyl diphosphate). The length of the polyprenyl side chain varies depending on the species, in humans, the side chain is comprised of 10 isoprenyls producing CoQ10 (also known as ubiquinone), whereas rodents predominantly generate CoQ9. However, this specificity is not complete, human tissues have low amounts of CoQ9 and rodent organs contain some CoQ10. Plays a central role in the biosynthesis of CoQ9. CoQ9 is a vital molecule that transports electrons from mitochondrial respiratory chain complexes. CoQs also function as cofactors for uncoupling protein and play a role as regulators of the extracellularly-induced ceramide-dependent apoptotic pathway. Regulates mitochondrial permeability transition pore (mPTP) opening and ROS production (pivotal events in cell death) in a tissue specific manner. In Mus musculus (Mouse), this protein is 4-hydroxybenzoate polyprenyltransferase, mitochondrial.